A 445-amino-acid polypeptide reads, in one-letter code: Adenylyltransferase and sulfurtransferase MOCS3 (445 aa).

Residues 49 to 70 form a disordered region; that stretch reads LPPSAAAEVEPTGSPSSSSSAA. ATP contacts are provided by residues Gly106, Asp127, 134–138, Lys151, and 170–171; these read DNLHR and NN. Zn(2+) contacts are provided by Cys211 and Cys214. The active-site Glycyl thioester intermediate; for adenylyltransferase activity is Cys228. Zn(2+)-binding residues include Cys286 and Cys289. The Rhodanese domain occupies 342–443; sequence SGRPHLLVDV…WAKEVDPSFL (102 aa). Catalysis depends on Cys403, which acts as the Cysteine persulfide intermediate; for sulfurtransferase activity.

In the N-terminal section; belongs to the HesA/MoeB/ThiF family. UBA4 subfamily. Zn(2+) serves as cofactor.

The protein localises to the cytoplasm. It localises to the cytosol. The enzyme catalyses [molybdopterin-synthase sulfur-carrier protein]-C-terminal Gly-Gly + ATP + H(+) = [molybdopterin-synthase sulfur-carrier protein]-C-terminal Gly-Gly-AMP + diphosphate. The catalysed reaction is [molybdopterin-synthase sulfur-carrier protein]-C-terminal Gly-Gly-AMP + S-sulfanyl-L-cysteinyl-[cysteine desulfurase] + AH2 = [molybdopterin-synthase sulfur-carrier protein]-C-terminal-Gly-aminoethanethioate + L-cysteinyl-[cysteine desulfurase] + A + AMP + 2 H(+). The protein operates within tRNA modification; 5-methoxycarbonylmethyl-2-thiouridine-tRNA biosynthesis. It participates in cofactor biosynthesis; molybdopterin biosynthesis. Its function is as follows. Plays a central role in 2-thiolation of mcm(5)S(2)U at tRNA wobble positions of cytosolic tRNA(Lys), tRNA(Glu) and tRNA(Gln). Also essential during biosynthesis of the molybdenum cofactor. Acts by mediating the C-terminal thiocarboxylation of sulfur carriers URM1 and MOCS2A. Its N-terminus first activates URM1 and MOCS2A as acyl-adenylates (-COAMP), then the persulfide sulfur on the catalytic cysteine is transferred to URM1 and MOCS2A to form thiocarboxylation (-COSH) of their C-terminus. The reaction probably involves hydrogen sulfide that is generated from the persulfide intermediate and that acts as a nucleophile towards URM1 and MOCS2A. Subsequently, a transient disulfide bond is formed. Does not use thiosulfate as sulfur donor; NFS1 probably acting as a sulfur donor for thiocarboxylation reactions. The chain is Adenylyltransferase and sulfurtransferase MOCS3 from Oryza sativa subsp. japonica (Rice).